The following is a 443-amino-acid chain: Oxygen-dependent coproporphyrinogen-III oxidase, mitochondrial (443 aa).

A mitochondrion-targeting transit peptide spans 1-98; it reads MALRLGQLGS…EMVPKSSGAR (98 aa). The interval 90-111 is disordered; it reads MVPKSSGARSPSPGRLEEDGDE. S101 is subject to Phosphoserine. Residues 182–191 form an important for dimerization region; that stretch reads VLQDGRVFEK. Coproporphyrinogen III is bound at residue S233. H247 functions as the Proton donor in the catalytic mechanism. Residue 249 to 251 participates in coproporphyrinogen III binding; it reads NYR. An important for dimerization region spans residues 381–417; sequence YVEFNLVYDRGTKFGLFTPGSRIESILMSLPLTARWE. Residue K393 is modified to N6-acetyllysine; alternate. K393 is subject to N6-succinyllysine; alternate. 400 to 402 provides a ligand contact to coproporphyrinogen III; the sequence is GSR.

It belongs to the aerobic coproporphyrinogen-III oxidase family. In terms of assembly, homodimer.

Its subcellular location is the mitochondrion intermembrane space. The enzyme catalyses coproporphyrinogen III + O2 + 2 H(+) = protoporphyrinogen IX + 2 CO2 + 2 H2O. Its pathway is porphyrin-containing compound metabolism; protoporphyrin-IX biosynthesis; protoporphyrinogen-IX from coproporphyrinogen-III (O2 route): step 1/1. Its function is as follows. Involved in the heme biosynthesis. Catalyzes the aerobic oxidative decarboxylation of propionate groups of rings A and B of coproporphyrinogen-III to yield the vinyl groups in protoporphyrinogen-IX. The chain is Oxygen-dependent coproporphyrinogen-III oxidase, mitochondrial from Rattus norvegicus (Rat).